A 172-amino-acid chain; its full sequence is Adenine phosphoribosyltransferase (172 aa).

The protein belongs to the purine/pyrimidine phosphoribosyltransferase family. In terms of assembly, homodimer.

The protein resides in the cytoplasm. The catalysed reaction is AMP + diphosphate = 5-phospho-alpha-D-ribose 1-diphosphate + adenine. Its pathway is purine metabolism; AMP biosynthesis via salvage pathway; AMP from adenine: step 1/1. Functionally, catalyzes a salvage reaction resulting in the formation of AMP, that is energically less costly than de novo synthesis. In Pediococcus pentosaceus (strain ATCC 25745 / CCUG 21536 / LMG 10740 / 183-1w), this protein is Adenine phosphoribosyltransferase.